Reading from the N-terminus, the 292-residue chain is uncharacterized protein (292 aa).

The protein belongs to the glycosyltransferase 2 family. WaaE/KdtX subfamily.

This is an uncharacterized protein from Rickettsia prowazekii (strain Madrid E).